A 316-amino-acid chain; its full sequence is Ninja-family protein 2 (316 aa).

Disordered regions lie at residues 1–29 (MASR…GEPD) and 72–236 (TSDD…TSTG). Positions 99–108 (ERWRRREMQS) are enriched in basic and acidic residues. A compositionally biased stretch (polar residues) spans 156 to 166 (DQGNTSSSMPE). 2 stretches are compositionally biased toward low complexity: residues 179–199 (SSME…QNKS) and 222–235 (LRTL…TTST).

Belongs to the Ninja family.

The protein resides in the nucleus. This is Ninja-family protein 2 (AFP-B1) from Triticum aestivum (Wheat).